The following is a 683-amino-acid chain: uncharacterized protein (683 aa).

3 coiled-coil regions span residues 62–124 (PEHY…RKER), 155–259 (TTTN…KLSQ), and 346–376 (KKSL…DGDV). A disordered region spans residues 213–237 (QDQVESQTGPKKRRKSPIENQPTAG).

This is an uncharacterized protein from Invertebrate iridescent virus 3 (IIV-3).